The chain runs to 193 residues: MGLISSNSTITAPKSKGIIDPNTGELIGSDDRFFCEVNAELSEKGFLVTSADALITWARTGSLMWMSFGLACCAIEMMQCSMPHYDNERFGYAPRASPRQSDVMVVAGTLTNKMAPALRKVYDQMPEPRYVISMGSCANGGGYYHYSYSVVRGCDRIVPVDIYVPGCPPTAEALLYGILLLQKKIRRTGSIER.

The [4Fe-4S] cluster site is built by Cys72, Cys73, Cys137, and Cys167.

This sequence belongs to the complex I 20 kDa subunit family. NDH-1 is composed of 14 different subunits. Subunits NuoB, C, D, E, F, and G constitute the peripheral sector of the complex. It depends on [4Fe-4S] cluster as a cofactor.

It localises to the cell inner membrane. It carries out the reaction a quinone + NADH + 5 H(+)(in) = a quinol + NAD(+) + 4 H(+)(out). Functionally, NDH-1 shuttles electrons from NADH, via FMN and iron-sulfur (Fe-S) centers, to quinones in the respiratory chain. The immediate electron acceptor for the enzyme in this species is believed to be ubiquinone. Couples the redox reaction to proton translocation (for every two electrons transferred, four hydrogen ions are translocated across the cytoplasmic membrane), and thus conserves the redox energy in a proton gradient. The protein is NADH-quinone oxidoreductase subunit B of Bartonella henselae (strain ATCC 49882 / DSM 28221 / CCUG 30454 / Houston 1) (Rochalimaea henselae).